Consider the following 651-residue polypeptide: L-aspartate oxidase, chloroplastic (651 aa).

The transit peptide at 1-74 (MAAHVSTGNI…PISETSKPIR (74 aa)) directs the protein to the chloroplast. Residues 92 to 95 (SGVA), lysine 114, 121 to 128 (NTNYAQGG), and aspartate 292 each bind FAD. Residue arginine 368 is the Proton donor/acceptor of the active site. FAD contacts are provided by residues glutamate 453 and 469-470 (SL).

Belongs to the FAD-dependent oxidoreductase 2 family. NadB subfamily. As to quaternary structure, interacts in vitro with QS. Requires FAD as cofactor.

The protein localises to the plastid. The protein resides in the chloroplast. It carries out the reaction L-aspartate + O2 = iminosuccinate + H2O2. Its pathway is cofactor biosynthesis; NAD(+) biosynthesis; iminoaspartate from L-aspartate (oxidase route): step 1/1. Catalyzes the oxidation of L-aspartate to iminoaspartate. Can complement nadB-deficient E.coli mutant. Plays a role in stomatal immunity. The chain is L-aspartate oxidase, chloroplastic from Arabidopsis thaliana (Mouse-ear cress).